A 550-amino-acid polypeptide reads, in one-letter code: Glucose import ATP-binding protein TsgD13 (550 aa).

2 consecutive ABC transporter domains span residues 7–270 and 287–533; these read LRME…VGRE and LRAR…TGGG. 39–46 is an ATP binding site; the sequence is GENGAGKS. Residues 529–550 form a disordered region; sequence MTGGGDATATAGAQVRGLGGSS.

Belongs to the ABC transporter superfamily. As to quaternary structure, the complex is composed of two ATP-binding proteins (TsgD13), two transmembrane proteins (TsgB13 and TsgC13) and a solute-binding protein (TsgA13).

The protein resides in the cell membrane. The enzyme catalyses D-glucose(out) + ATP + H2O = D-glucose(in) + ADP + phosphate + H(+). Part of an ABC transporter complex involved in glucose import. Responsible for energy coupling to the transport system. The polypeptide is Glucose import ATP-binding protein TsgD13 (tsgD13) (Haloferax volcanii (strain ATCC 29605 / DSM 3757 / JCM 8879 / NBRC 14742 / NCIMB 2012 / VKM B-1768 / DS2) (Halobacterium volcanii)).